The primary structure comprises 215 residues: Protein Syd (215 aa).

This sequence belongs to the Syd family.

The protein localises to the cell inner membrane. Interacts with the SecY protein in vivo. May bind preferentially to an uncomplexed state of SecY, thus functioning either as a chelating agent for excess SecY in the cell or as a regulatory factor that negatively controls the translocase function. In Shewanella piezotolerans (strain WP3 / JCM 13877), this protein is Protein Syd.